We begin with the raw amino-acid sequence, 172 residues long: Galectin-related protein (172 aa).

Ala2 is modified (N-acetylalanine). Phosphoserine is present on residues Ser22 and Ser25. The region spanning 39-168 (PFCGHIKGGM…TIKINGDLQI (130 aa)) is the Galectin domain.

In terms of assembly, monomer.

Its function is as follows. Does not bind lactose, and may not bind carbohydrates. This chain is Galectin-related protein (LGALSL), found in Homo sapiens (Human).